We begin with the raw amino-acid sequence, 130 residues long: Probable pilin MJ0835.1 (130 aa).

The propeptide occupies 1–14; that stretch reads MNTMENKIIKSKKA. Residues 15–23 carry the QXSXEXXXL motif; sequence QVSLEFSFL.

The N-terminus is cleaved by the prepilin peptidase EppA, which recognizes the class III signal sequence.

Its subcellular location is the secreted. It localises to the cell surface. The protein resides in the fimbrium. This is Probable pilin MJ0835.1 from Methanocaldococcus jannaschii (strain ATCC 43067 / DSM 2661 / JAL-1 / JCM 10045 / NBRC 100440) (Methanococcus jannaschii).